The following is a 307-amino-acid chain: MLVVGSELQSDAQQLSAEAPRHGELQYLRQVEHILRCGFKKEDRTGTGTLSVFGMQARYSLRDEFPLLTTKRVFWKGVLEELLWFIKGSTNAKELSSKGVRIWDANGSRDFLDSLGFSARQEGDLGPVYGFQWRHFGAEYKDMDSDYSGQGVDQLQKVIDTIKTNPDDRRIIMCAWNPKDLPLMALPPCHALCQFYVVNGELSCQLYQRSGDMGLGVPFNIASYALLTYMIAHITGLQPGDFVHTLGDAHIYLNHIEPLKIQLQREPRPFPKLKILRKVETIDDFKVEDFQIEGYNPHPTIKMEMAV.

Position 44 (R44) interacts with dUMP. S108 carries the post-translational modification Phosphoserine. DUMP contacts are provided by residues R169–R170, C189–H190, R209–D212, N220, and H250–Y252. Catalysis depends on C189, which acts as the Nucleophile. D212 provides a ligand contact to (6R)-5,10-methylene-5,6,7,8-tetrahydrofolate. Residues K286 and K302 each participate in a glycyl lysine isopeptide (Lys-Gly) (interchain with G-Cter in SUMO2) cross-link. A306 contributes to the (6R)-5,10-methylene-5,6,7,8-tetrahydrofolate binding site.

It belongs to the thymidylate synthase family. As to quaternary structure, homodimer.

Its subcellular location is the nucleus. The protein resides in the cytoplasm. It localises to the mitochondrion. It is found in the mitochondrion matrix. The protein localises to the mitochondrion inner membrane. It carries out the reaction dUMP + (6R)-5,10-methylene-5,6,7,8-tetrahydrofolate = 7,8-dihydrofolate + dTMP. The protein operates within pyrimidine metabolism; dTTP biosynthesis. In terms of biological role, catalyzes the reductive methylation of 2'-deoxyuridine 5'-monophosphate (dUMP) to thymidine 5'-monophosphate (dTMP), using the cosubstrate, 5,10- methylenetetrahydrofolate (CH2H4folate) as a 1-carbon donor and reductant and contributes to the de novo mitochondrial thymidylate biosynthesis pathway. The protein is Thymidylate synthase (Tyms) of Mus musculus (Mouse).